A 322-amino-acid polypeptide reads, in one-letter code: 4-diphosphocytidyl-2-C-methyl-D-erythritol kinase (322 aa).

Lys-18 is a catalytic residue. Residue 130–140 (PMGAGLGGGSS) participates in ATP binding. The active site involves Asp-172.

It belongs to the GHMP kinase family. IspE subfamily.

The enzyme catalyses 4-CDP-2-C-methyl-D-erythritol + ATP = 4-CDP-2-C-methyl-D-erythritol 2-phosphate + ADP + H(+). It functions in the pathway isoprenoid biosynthesis; isopentenyl diphosphate biosynthesis via DXP pathway; isopentenyl diphosphate from 1-deoxy-D-xylulose 5-phosphate: step 3/6. Its function is as follows. Catalyzes the phosphorylation of the position 2 hydroxy group of 4-diphosphocytidyl-2C-methyl-D-erythritol. This chain is 4-diphosphocytidyl-2-C-methyl-D-erythritol kinase, found in Psychrobacter cryohalolentis (strain ATCC BAA-1226 / DSM 17306 / VKM B-2378 / K5).